Reading from the N-terminus, the 348-residue chain is Hereditary hemochromatosis protein (348 aa).

Residues 1-22 (MGPRARPALLLLMLLQTAVLQG) form the signal peptide. The segment at 23–114 (RLLRSHSLHY…IMENHNHSKE (92 aa)) is alpha-1. The Extracellular segment spans residues 23-306 (RLLRSHSLHY…WEPSPSGTLV (284 aa)). Asn-110, Asn-130, and Asn-234 each carry an N-linked (GlcNAc...) asparagine glycan. Positions 115–205 (SHTLQVILGC…ELGRGVLDQQ (91 aa)) are alpha-2. 2 cysteine pairs are disulfide-bonded: Cys-124/Cys-187 and Cys-225/Cys-282. Positions 206–297 (VPPLVKVTHH…GLDQPLIVIW (92 aa)) are alpha-3. The Ig-like C1-type domain occupies 207–298 (PPLVKVTHHV…LDQPLIVIWE (92 aa)). A connecting peptide region spans residues 298–306 (EPSPSGTLV). The chain crosses the membrane as a helical span at residues 307 to 330 (IGVISGIAVFVVILFIGILFIILR). Residues 331 to 348 (KRQGSRGAMGHYVLAERE) are Cytoplasmic-facing.

It belongs to the MHC class I family. Binds TFR through the extracellular domain in a pH-dependent manner. Expressed in all tissues tested except brain.

It localises to the cell membrane. In terms of biological role, binds to transferrin receptor (TFR) and reduces its affinity for iron-loaded transferrin. The protein is Hereditary hemochromatosis protein (HFE) of Homo sapiens (Human).